The chain runs to 250 residues: 2,3-bisphosphoglycerate-dependent phosphoglycerate mutase (250 aa).

Substrate is bound by residues 8-15 (RHGESQWN), 21-22 (TG), Arg60, 87-90 (ERHY), Lys98, 114-115 (RR), and 183-184 (GN). The active-site Tele-phosphohistidine intermediate is His9. Catalysis depends on Glu87, which acts as the Proton donor/acceptor.

This sequence belongs to the phosphoglycerate mutase family. BPG-dependent PGAM subfamily. Homodimer.

It carries out the reaction (2R)-2-phosphoglycerate = (2R)-3-phosphoglycerate. Its pathway is carbohydrate degradation; glycolysis; pyruvate from D-glyceraldehyde 3-phosphate: step 3/5. Functionally, catalyzes the interconversion of 2-phosphoglycerate and 3-phosphoglycerate. This chain is 2,3-bisphosphoglycerate-dependent phosphoglycerate mutase, found in Bordetella petrii (strain ATCC BAA-461 / DSM 12804 / CCUG 43448).